Reading from the N-terminus, the 70-residue chain is Small ribosomal subunit protein bS21B (70 aa).

The interval 37-70 (SYEKPTTERKRKKAAAVARLRKQVRRSMPPKKKY) is disordered. Positions 45–70 (RKRKKAAAVARLRKQVRRSMPPKKKY) are enriched in basic residues.

The protein belongs to the bacterial ribosomal protein bS21 family.

This chain is Small ribosomal subunit protein bS21B, found in Burkholderia pseudomallei (strain K96243).